The following is a 157-amino-acid chain: Arginine repressor (157 aa).

It belongs to the ArgR family.

It is found in the cytoplasm. It participates in amino-acid biosynthesis; L-arginine biosynthesis [regulation]. Its function is as follows. Regulates arginine biosynthesis genes. This is Arginine repressor from Bacteroides thetaiotaomicron (strain ATCC 29148 / DSM 2079 / JCM 5827 / CCUG 10774 / NCTC 10582 / VPI-5482 / E50).